The chain runs to 235 residues: Protein GrpE (235 aa).

Basic and acidic residues-rich tracts occupy residues 1-16 (MENKNQKHNNEFHEKN) and 24-35 (NNVKKENLHEDQ). A disordered region spans residues 1–51 (MENKNQKHNNEFHEKNQQSQKDNNNVKKENLHEDQSDLNDANFDDGGKKNK).

Belongs to the GrpE family. As to quaternary structure, homodimer.

It is found in the cytoplasm. Its function is as follows. Participates actively in the response to hyperosmotic and heat shock by preventing the aggregation of stress-denatured proteins, in association with DnaK and GrpE. It is the nucleotide exchange factor for DnaK and may function as a thermosensor. Unfolded proteins bind initially to DnaJ; upon interaction with the DnaJ-bound protein, DnaK hydrolyzes its bound ATP, resulting in the formation of a stable complex. GrpE releases ADP from DnaK; ATP binding to DnaK triggers the release of the substrate protein, thus completing the reaction cycle. Several rounds of ATP-dependent interactions between DnaJ, DnaK and GrpE are required for fully efficient folding. The chain is Protein GrpE from Malacoplasma penetrans (strain HF-2) (Mycoplasma penetrans).